The chain runs to 349 residues: Phosphoribosylformylglycinamidine cyclo-ligase (349 aa).

It belongs to the AIR synthase family.

The protein resides in the cytoplasm. It catalyses the reaction 2-formamido-N(1)-(5-O-phospho-beta-D-ribosyl)acetamidine + ATP = 5-amino-1-(5-phospho-beta-D-ribosyl)imidazole + ADP + phosphate + H(+). It functions in the pathway purine metabolism; IMP biosynthesis via de novo pathway; 5-amino-1-(5-phospho-D-ribosyl)imidazole from N(2)-formyl-N(1)-(5-phospho-D-ribosyl)glycinamide: step 2/2. This is Phosphoribosylformylglycinamidine cyclo-ligase from Bordetella pertussis (strain Tohama I / ATCC BAA-589 / NCTC 13251).